Reading from the N-terminus, the 103-residue chain is Small ribosomal subunit protein uS10 (103 aa).

It belongs to the universal ribosomal protein uS10 family. As to quaternary structure, part of the 30S ribosomal subunit.

Its function is as follows. Involved in the binding of tRNA to the ribosomes. This Burkholderia mallei (strain NCTC 10247) protein is Small ribosomal subunit protein uS10.